The chain runs to 210 residues: Ribosomal RNA large subunit methyltransferase E (210 aa).

5 residues coordinate S-adenosyl-L-methionine: glycine 61, tryptophan 63, aspartate 81, aspartate 97, and aspartate 122. The Proton acceptor role is filled by lysine 162. Basic and acidic residues predominate over residues 187–196 (KPEASRKRSP). Residues 187 to 210 (KPEASRKRSPEVYALGQGKRAHMK) are disordered.

It belongs to the class I-like SAM-binding methyltransferase superfamily. RNA methyltransferase RlmE family.

It localises to the cytoplasm. The enzyme catalyses uridine(2552) in 23S rRNA + S-adenosyl-L-methionine = 2'-O-methyluridine(2552) in 23S rRNA + S-adenosyl-L-homocysteine + H(+). In terms of biological role, specifically methylates the uridine in position 2552 of 23S rRNA at the 2'-O position of the ribose in the fully assembled 50S ribosomal subunit. In Stenotrophomonas maltophilia (strain K279a), this protein is Ribosomal RNA large subunit methyltransferase E.